The primary structure comprises 255 residues: ParA family protein CT_582 (255 aa).

It belongs to the ParA family.

In Chlamydia trachomatis serovar D (strain ATCC VR-885 / DSM 19411 / UW-3/Cx), this protein is ParA family protein CT_582.